The sequence spans 206 residues: Thiamine-phosphate synthase (206 aa).

Residues 38-42 (QLRAK) and asparagine 70 contribute to the 4-amino-2-methyl-5-(diphosphooxymethyl)pyrimidine site. 2 residues coordinate Mg(2+): aspartate 71 and aspartate 90. Residue serine 107 participates in 4-amino-2-methyl-5-(diphosphooxymethyl)pyrimidine binding. Position 133 to 135 (133 to 135 (TTT)) interacts with 2-[(2R,5Z)-2-carboxy-4-methylthiazol-5(2H)-ylidene]ethyl phosphate. Lysine 136 is a binding site for 4-amino-2-methyl-5-(diphosphooxymethyl)pyrimidine. 2-[(2R,5Z)-2-carboxy-4-methylthiazol-5(2H)-ylidene]ethyl phosphate contacts are provided by residues glycine 164 and 184-185 (VS).

Belongs to the thiamine-phosphate synthase family. Requires Mg(2+) as cofactor.

The enzyme catalyses 2-[(2R,5Z)-2-carboxy-4-methylthiazol-5(2H)-ylidene]ethyl phosphate + 4-amino-2-methyl-5-(diphosphooxymethyl)pyrimidine + 2 H(+) = thiamine phosphate + CO2 + diphosphate. It catalyses the reaction 2-(2-carboxy-4-methylthiazol-5-yl)ethyl phosphate + 4-amino-2-methyl-5-(diphosphooxymethyl)pyrimidine + 2 H(+) = thiamine phosphate + CO2 + diphosphate. It carries out the reaction 4-methyl-5-(2-phosphooxyethyl)-thiazole + 4-amino-2-methyl-5-(diphosphooxymethyl)pyrimidine + H(+) = thiamine phosphate + diphosphate. Its pathway is cofactor biosynthesis; thiamine diphosphate biosynthesis; thiamine phosphate from 4-amino-2-methyl-5-diphosphomethylpyrimidine and 4-methyl-5-(2-phosphoethyl)-thiazole: step 1/1. Its function is as follows. Condenses 4-methyl-5-(beta-hydroxyethyl)thiazole monophosphate (THZ-P) and 2-methyl-4-amino-5-hydroxymethyl pyrimidine pyrophosphate (HMP-PP) to form thiamine monophosphate (TMP). The chain is Thiamine-phosphate synthase from Herpetosiphon aurantiacus (strain ATCC 23779 / DSM 785 / 114-95).